The chain runs to 400 residues: MGTPGSGRKRTPVKDRFSAEDEALSNIDREAEARLAAKRAARAEARDIRMRELERQQKELDEKSDKQYAENYTRPSSRNSASATTPLSGNSSRRVSGDTSSLIDPDTSLSELRESLSEVEEKYKKAMVSNAQLDNEKNNLIYQVDTLKDVIEEQEEQMAEFYRENEEKSKELERQKHMCSVLQHKMDELKEGLRQRDELIEKHGLVIIPDGTPNGDVHQEPAVGAITVVSQEAAQVLESAGEGPLDVRLRKLAGEKEELLSQIRKLKLQLEEERQKCSGRDGTAGDLAELQNGSDLQLIEMQRDANRQISEYKFKLSKAEQDITTLEQSISRLEGQVLRYRTAAENAEKVEDELKAEKRKLQRELRTALDKIEEMEMTNSHLAKRLEKMKANRTALLAQQ.

Disordered stretches follow at residues Met-1–Asp-28 and Leu-53–Val-119. At Ser-18 the chain carries Phosphoserine. Residues Arg-29–Asn-71 adopt a coiled-coil conformation. Positions Leu-53–Tyr-68 are enriched in basic and acidic residues. The segment covering Thr-73–Leu-102 has biased composition (polar residues). Phosphoserine occurs at positions 77, 80, 88, 92, and 96. At Thr-99 the chain carries Phosphothreonine. Phosphoserine occurs at positions 100 and 101. 2 coiled-coil regions span residues Asp-106–Lys-202 and Leu-245–Arg-393.

The protein belongs to the LRRFIP family. As to quaternary structure, interacts with DVL3 and FLII. Weakly interacts with MYD88 in resting cells. Following LPS-stimulation, the interaction with MYD88 is rapidly enhanced; the complex gradually dissociates to basal levels after 6 hours of stimulation. Interaction with MYD88 is regulated by LPS-induced phosphorylation. In the presence of LPS, competes with FLII for MYD88-binding.

Functionally, may function as activator of the canonical Wnt signaling pathway, in association with DVL3, upstream of CTNNB1/beta-catenin. Positively regulates Toll-like receptor (TLR) signaling in response to agonist probably by competing with the negative FLII regulator for MYD88-binding. The chain is Leucine-rich repeat flightless-interacting protein 2 (LRRFIP2) from Bos taurus (Bovine).